A 283-amino-acid chain; its full sequence is DNA repair protein RecO (283 aa).

The segment covering 254 to 264 (SSPASVGSSAT) has biased composition (polar residues). A disordered region spans residues 254–283 (SSPASVGSSATRYFAQGDTDENDRDPPGAR).

It belongs to the RecO family.

In terms of biological role, involved in DNA repair and RecF pathway recombination. The protein is DNA repair protein RecO of Roseiflexus sp. (strain RS-1).